The following is a 235-amino-acid chain: Uridylate kinase (235 aa).

ATP is bound at residue 12 to 15 (KISG). Position 54 (Gly54) interacts with UMP. Residues Gly55 and Arg59 each coordinate ATP. UMP-binding positions include Asp72 and 133–140 (TGNPFFST). ATP is bound by residues Tyr166 and Asp169.

Belongs to the UMP kinase family. In terms of assembly, homohexamer.

The protein resides in the cytoplasm. It carries out the reaction UMP + ATP = UDP + ADP. It participates in pyrimidine metabolism; CTP biosynthesis via de novo pathway; UDP from UMP (UMPK route): step 1/1. With respect to regulation, inhibited by UTP. Its function is as follows. Catalyzes the reversible phosphorylation of UMP to UDP. The chain is Uridylate kinase from Acetivibrio thermocellus (strain ATCC 27405 / DSM 1237 / JCM 9322 / NBRC 103400 / NCIMB 10682 / NRRL B-4536 / VPI 7372) (Clostridium thermocellum).